The following is a 498-amino-acid chain: Isocitrate dehydrogenase [NADP], mitochondrial (498 aa).

Residues 164 to 166 (TIT) and R171 each bind NADP(+). T166 provides a ligand contact to substrate. Substrate-binding positions include 183 to 189 (SPNGTIR), R198, and R221. D339 is a Mn(2+) binding site. Residue K347 participates in NADP(+) binding. D362 contributes to the Mn(2+) binding site. NADP(+) is bound by residues 397-402 (GTVTRH) and N415.

Belongs to the isocitrate and isopropylmalate dehydrogenases family. Mg(2+) is required as a cofactor. Mn(2+) serves as cofactor.

The protein resides in the mitochondrion. The catalysed reaction is D-threo-isocitrate + NADP(+) = 2-oxoglutarate + CO2 + NADPH. This is Isocitrate dehydrogenase [NADP], mitochondrial (icdA) from Aspergillus niger.